Reading from the N-terminus, the 273-residue chain is Polyamine aminopropyltransferase (273 aa).

Positions 5–238 (ENWFSERYSD…GFWSFTVASP (234 aa)) constitute a PABS domain. Residue glutamine 34 participates in S-methyl-5'-thioadenosine binding. Positions 65 and 90 each coordinate spermidine. Residues glutamate 109 and 140-141 (DG) contribute to the S-methyl-5'-thioadenosine site. The Proton acceptor role is filled by aspartate 158. 158–161 (DSTD) serves as a coordination point for spermidine. Proline 165 contacts S-methyl-5'-thioadenosine.

Belongs to the spermidine/spermine synthase family. As to quaternary structure, homodimer or homotetramer.

The protein resides in the cytoplasm. The catalysed reaction is S-adenosyl 3-(methylsulfanyl)propylamine + putrescine = S-methyl-5'-thioadenosine + spermidine + H(+). Its pathway is amine and polyamine biosynthesis; spermidine biosynthesis; spermidine from putrescine: step 1/1. Functionally, catalyzes the irreversible transfer of a propylamine group from the amino donor S-adenosylmethioninamine (decarboxy-AdoMet) to putrescine (1,4-diaminobutane) to yield spermidine. The chain is Polyamine aminopropyltransferase from Thermoplasma acidophilum (strain ATCC 25905 / DSM 1728 / JCM 9062 / NBRC 15155 / AMRC-C165).